The sequence spans 361 residues: Pyruvate dehydrogenase E1 component subunit beta, mitochondrial (361 aa).

The N-terminal 27 residues, 1–27 (MAVNGCMRLLRNGLTSACALEQSVRRL), are a transit peptide targeting the mitochondrion. A thiamine diphosphate-binding site is contributed by Glu90. 5 residues coordinate K(+): Ile143, Ala191, Val192, Asp194, and Asn196.

In terms of assembly, heterotetramer of two PDHA1 and two PDHB subunits. The heterotetramer interacts with DLAT, and is part of the multimeric pyruvate dehydrogenase complex that contains multiple copies of pyruvate dehydrogenase (E1), dihydrolipoamide acetyltransferase (DLAT, E2) and lipoamide dehydrogenase (DLD, E3). Thiamine diphosphate is required as a cofactor.

The protein resides in the mitochondrion matrix. It carries out the reaction N(6)-[(R)-lipoyl]-L-lysyl-[protein] + pyruvate + H(+) = N(6)-[(R)-S(8)-acetyldihydrolipoyl]-L-lysyl-[protein] + CO2. Functionally, the pyruvate dehydrogenase complex catalyzes the overall conversion of pyruvate to acetyl-CoA and CO(2), and thereby links the glycolytic pathway to the tricarboxylic cycle. The protein is Pyruvate dehydrogenase E1 component subunit beta, mitochondrial of Ascaris suum (Pig roundworm).